The following is a 310-amino-acid chain: UPF0761 membrane protein VF_0100 (310 aa).

The next 6 helical transmembrane spans lie at 34-54 (YMAY…LSVL), 97-117 (MTAV…SSID), 136-156 (FSLY…SLAA), 178-198 (LLGW…YLLV), 207-227 (HALI…VGFA), and 242-262 (ALAA…IVLI).

The protein belongs to the UPF0761 family.

It is found in the cell inner membrane. The protein is UPF0761 membrane protein VF_0100 of Aliivibrio fischeri (strain ATCC 700601 / ES114) (Vibrio fischeri).